A 52-amino-acid chain; its full sequence is UPF0391 membrane protein ABAYE0050 (52 aa).

A run of 2 helical transmembrane segments spans residues 6–26 (IIFA…VAGL) and 30–50 (FAVI…ISRG).

This sequence belongs to the UPF0391 family.

It localises to the cell membrane. The chain is UPF0391 membrane protein ABAYE0050 from Acinetobacter baumannii (strain AYE).